Here is a 347-residue protein sequence, read N- to C-terminus: MSPAPPPVDQWFRPFGVLRLSLTARCNLACPYCCPDSEELPGLMRLDQQVRLVRVACGLGVHTLRLTGGEPLLSDRLLPLLEALAAGRSNAADPLARLQEVALTTNGVLLTPEKALALRAAGLDRITVSLDALEGGVVATMAGLRGGQRAGERLVEQVLGGLSAARRAGFEPASGGLKLNAVMRRGLNDSQLLPLATLARERGVELRLIEYMDVGNRNGWAPDQVISAAEMVQRIDARWPLRPLPRESGATSRRWSYADGRGRIGTIASITEPFCGDCNRLRVTADGQAFTCLFASEGTDLRPFLHSEETLEAVVRGLWQQRRDRYSEERQGFTASAPHAEMAYLGG.

A Radical SAM core domain is found at 12–242; that stretch reads FRPFGVLRLS…QRIDARWPLR (231 aa). A GTP-binding site is contributed by Arg19. Residues Cys26 and Cys30 each contribute to the [4Fe-4S] cluster site. Tyr32 contacts S-adenosyl-L-methionine. Cys33 is a [4Fe-4S] cluster binding site. Arg65 provides a ligand contact to GTP. Gly69 contacts S-adenosyl-L-methionine. Thr104 serves as a coordination point for GTP. Ser129 contributes to the S-adenosyl-L-methionine binding site. Lys178 contacts GTP. Met212 is an S-adenosyl-L-methionine binding site. The [4Fe-4S] cluster site is built by Cys275 and Cys278. GTP is bound at residue 280–282; it reads RLR. Cys292 is a binding site for [4Fe-4S] cluster.

It belongs to the radical SAM superfamily. MoaA family. As to quaternary structure, monomer and homodimer. The cofactor is [4Fe-4S] cluster.

It catalyses the reaction GTP + AH2 + S-adenosyl-L-methionine = (8S)-3',8-cyclo-7,8-dihydroguanosine 5'-triphosphate + 5'-deoxyadenosine + L-methionine + A + H(+). The protein operates within cofactor biosynthesis; molybdopterin biosynthesis. Catalyzes the cyclization of GTP to (8S)-3',8-cyclo-7,8-dihydroguanosine 5'-triphosphate. This chain is GTP 3',8-cyclase, found in Synechococcus sp. (strain WH7803).